An 879-amino-acid chain; its full sequence is Alanine--tRNA ligase (879 aa).

Positions 565, 569, 674, and 678 each coordinate Zn(2+).

The protein belongs to the class-II aminoacyl-tRNA synthetase family. Zn(2+) is required as a cofactor.

The protein localises to the cytoplasm. The catalysed reaction is tRNA(Ala) + L-alanine + ATP = L-alanyl-tRNA(Ala) + AMP + diphosphate. Functionally, catalyzes the attachment of alanine to tRNA(Ala) in a two-step reaction: alanine is first activated by ATP to form Ala-AMP and then transferred to the acceptor end of tRNA(Ala). Also edits incorrectly charged Ser-tRNA(Ala) and Gly-tRNA(Ala) via its editing domain. The polypeptide is Alanine--tRNA ligase (Gluconobacter oxydans (strain 621H) (Gluconobacter suboxydans)).